A 325-amino-acid chain; its full sequence is Tagatose 1,6-diphosphate aldolase (325 aa).

Belongs to the aldolase LacD family.

It carries out the reaction D-tagatofuranose 1,6-bisphosphate = D-glyceraldehyde 3-phosphate + dihydroxyacetone phosphate. It participates in carbohydrate metabolism; D-tagatose 6-phosphate degradation; D-glyceraldehyde 3-phosphate and glycerone phosphate from D-tagatose 6-phosphate: step 2/2. The chain is Tagatose 1,6-diphosphate aldolase from Staphylococcus epidermidis (strain ATCC 35984 / DSM 28319 / BCRC 17069 / CCUG 31568 / BM 3577 / RP62A).